The following is a 251-amino-acid chain: Cell division protein ZapD (251 aa).

This sequence belongs to the ZapD family. Interacts with FtsZ.

It is found in the cytoplasm. Cell division factor that enhances FtsZ-ring assembly. Directly interacts with FtsZ and promotes bundling of FtsZ protofilaments, with a reduction in FtsZ GTPase activity. In Burkholderia cenocepacia (strain ATCC BAA-245 / DSM 16553 / LMG 16656 / NCTC 13227 / J2315 / CF5610) (Burkholderia cepacia (strain J2315)), this protein is Cell division protein ZapD.